The sequence spans 509 residues: UDP-N-acetylmuramyl-tripeptide synthetase (509 aa).

124 to 130 contacts ATP; sequence GTNGKTS. Residues 164–165, serine 191, and arginine 199 each bind UDP-N-acetyl-alpha-D-muramoyl-L-alanyl-D-glutamate; that span reads TT. At lysine 231 the chain carries N6-carboxylysine.

Belongs to the MurCDEF family. MurE subfamily. Carboxylation is probably crucial for Mg(2+) binding and, consequently, for the gamma-phosphate positioning of ATP.

The protein resides in the cytoplasm. The protein operates within cell wall biogenesis; peptidoglycan biosynthesis. Functionally, catalyzes the addition of an amino acid to the nucleotide precursor UDP-N-acetylmuramoyl-L-alanyl-D-glutamate (UMAG) in the biosynthesis of bacterial cell-wall peptidoglycan. In Tropheryma whipplei (strain Twist) (Whipple's bacillus), this protein is UDP-N-acetylmuramyl-tripeptide synthetase.